The sequence spans 278 residues: Small ribosomal subunit protein uS2 (278 aa).

An N-acetylserine modification is found at serine 2. The tract at residues 258 to 278 is disordered; the sequence is TNEGKTAADEWATGAQTQSNW.

It belongs to the universal ribosomal protein uS2 family. In terms of assembly, component of the small ribosomal subunit. Mature ribosomes consist of a small (40S) and a large (60S) subunit. The 40S subunit contains about 33 different proteins and 1 molecule of RNA (18S). The 60S subunit contains about 49 different proteins and 3 molecules of RNA (28S, 5.8S and 5S). Interacts with rps-21.

Its subcellular location is the cytoplasm. In terms of biological role, required for the assembly and/or stability of the 40S ribosomal subunit. Required for the processing of the 20S rRNA-precursor to mature 18S rRNA in a late step of the maturation of 40S ribosomal subunits. This is Small ribosomal subunit protein uS2 from Caenorhabditis briggsae.